The sequence spans 1247 residues: Nitric oxide synthase (1247 aa).

Residues 13–33 are disordered; the sequence is EVAEGRESSKANHIGEERRGY. Serine 146 contacts (6R)-L-erythro-5,6,7,8-tetrahydrobiopterin. Cysteine 224 is a heme b binding site. Glutamine 287, tryptophan 396, tyrosine 397, glutamate 401, and asparagine 406 together coordinate L-arginine. Tryptophan 487 and phenylalanine 500 together coordinate (6R)-L-erythro-5,6,7,8-tetrahydrobiopterin. Tyrosine 515 contributes to the heme b binding site. The interval 537–557 is calmodulin-binding; sequence PRRKFNFKQIARAVKFTSKLF. The Flavodoxin-like domain occupies 567–766; sequence ATVLYATETG…AFRKWAPEVF (200 aa). 712–743 is a binding site for FMN; that stretch reads VFALGSSAYPNFCAFGKYIDNILGELGGERLM. An FAD-binding FR-type domain is found at 795-1065; it reads NTVRYAPVAE…VRSAPSFHMS (271 aa). Residues 855–866 and 998–1008 each bind FAD; these read YEPGDHVGIFPA and LQPRFYSISSS. NADP(+) is bound by residues 1073–1091 and 1170–1185; these read ILIG…WQEW and KGHI…AEHV.

This sequence belongs to the NOS family. Heme b is required as a cofactor. Requires FAD as cofactor. It depends on FMN as a cofactor.

The catalysed reaction is 2 L-arginine + 3 NADPH + 4 O2 + H(+) = 2 L-citrulline + 2 nitric oxide + 3 NADP(+) + 4 H2O. With respect to regulation, stimulated by calcium/calmodulin. In terms of biological role, produces nitric oxide (NO) which is a messenger molecule with diverse functions throughout the body. Nitric oxide limits plasmodium development in the midgut. The protein is Nitric oxide synthase of Anopheles stephensi (Indo-Pakistan malaria mosquito).